Here is a 554-residue protein sequence, read N- to C-terminus: Thermosome subunit alpha (554 aa).

The segment at 530–554 (PKKKEKKGKTGEEEEEEGGGSKFEF) is disordered.

It belongs to the TCP-1 chaperonin family. Forms a Heterooligomeric complex of two stacked eight-membered rings.

Its function is as follows. Molecular chaperone; binds unfolded polypeptides in vitro, and has a weak ATPase activity. In Aeropyrum pernix (strain ATCC 700893 / DSM 11879 / JCM 9820 / NBRC 100138 / K1), this protein is Thermosome subunit alpha (thsA).